The primary structure comprises 354 residues: 3-isopropylmalate dehydrogenase (354 aa).

Residue 76–87 (GPRWDGAKERPE) participates in NAD(+) binding. Substrate is bound by residues R94, R104, R130, and D215. The Mg(2+) site is built by D215, D239, and D243. 273–285 (GSAPDIAGKNKAN) contributes to the NAD(+) binding site.

Belongs to the isocitrate and isopropylmalate dehydrogenases family. LeuB type 1 subfamily. Homodimer. Mg(2+) serves as cofactor. Mn(2+) is required as a cofactor.

It localises to the cytoplasm. The catalysed reaction is (2R,3S)-3-isopropylmalate + NAD(+) = 4-methyl-2-oxopentanoate + CO2 + NADH. It participates in amino-acid biosynthesis; L-leucine biosynthesis; L-leucine from 3-methyl-2-oxobutanoate: step 3/4. Its function is as follows. Catalyzes the oxidation of 3-carboxy-2-hydroxy-4-methylpentanoate (3-isopropylmalate) to 3-carboxy-4-methyl-2-oxopentanoate. The product decarboxylates to 4-methyl-2 oxopentanoate. This is 3-isopropylmalate dehydrogenase from Bacillus cereus (strain ZK / E33L).